The primary structure comprises 896 residues: Probable sodium/sulfate cotransporter 3 (896 aa).

A run of 5 helical transmembrane segments spans residues Met-1–Ile-21, Ile-47–Tyr-69, Val-106–Leu-126, Leu-140–Ser-160, and Met-186–Leu-206. 4 consecutive RCK C-terminal domains span residues Leu-212–Leu-296, Thr-319–Asn-404, Leu-408–Leu-493, and Glu-499–Val-586. Helical transmembrane passes span Met-602–Lys-622, Tyr-626–Met-646, Ala-654–Glu-674, Ala-685–Val-705, Leu-734–Ile-754, Phe-776–Cys-796, and Val-804–Leu-824. The disordered stretch occupies residues Arg-857–Pro-881. Positions Val-868–Pro-881 are enriched in polar residues.

Belongs to the divalent anion:Na+ symporter (DASS) superfamily. Na+/sulfate symporter (TC 2.A.47.4) family.

It localises to the cell membrane. Na(+)/sulfate cotransporter with a probable low-affinity for sulfate. The chain is Probable sodium/sulfate cotransporter 3 (SLT3) from Chlamydomonas reinhardtii (Chlamydomonas smithii).